We begin with the raw amino-acid sequence, 299 residues long: Zinc finger protein 414 (299 aa).

2 stretches are compositionally biased toward polar residues: residues methionine 1–asparagine 20 and serine 70–valine 80. Positions methionine 1–serine 102 are disordered. 2 consecutive C2H2-type zinc fingers follow at residues isoleucine 99–histidine 123 and phenylalanine 135–histidine 159. Residues phenylalanine 166–aspartate 190 form a C2H2-type 3; degenerate zinc finger. Disordered stretches follow at residues glutamine 193 to leucine 228 and proline 254 to arginine 299. The segment covering leucine 203 to glutamate 215 has biased composition (basic and acidic residues). The segment covering aspartate 217–leucine 228 has biased composition (low complexity). A compositionally biased stretch (polar residues) spans threonine 268–arginine 285.

Belongs to the krueppel C2H2-type zinc-finger protein family.

The protein localises to the nucleus. May be involved in transcriptional regulation. The polypeptide is Zinc finger protein 414 (Znf414) (Rattus norvegicus (Rat)).